Here is a 338-residue protein sequence, read N- to C-terminus: Aspartate-semialdehyde dehydrogenase (338 aa).

Residues 13–16 and 41–42 contribute to the NADP(+) site; these read TGNV and NS. A phosphate-binding site is contributed by Arg-101. The Acyl-thioester intermediate role is filled by Cys-132. Residue Gln-159 coordinates substrate. 162–163 provides a ligand contact to NADP(+); it reads SG. Position 216 (Lys-216) interacts with phosphate. Arg-237 lines the substrate pocket. His-244 acts as the Proton acceptor in catalysis. Residue Asn-317 coordinates NADP(+).

It belongs to the aspartate-semialdehyde dehydrogenase family. In terms of assembly, homodimer.

It carries out the reaction L-aspartate 4-semialdehyde + phosphate + NADP(+) = 4-phospho-L-aspartate + NADPH + H(+). It functions in the pathway amino-acid biosynthesis; L-lysine biosynthesis via DAP pathway; (S)-tetrahydrodipicolinate from L-aspartate: step 2/4. Its pathway is amino-acid biosynthesis; L-methionine biosynthesis via de novo pathway; L-homoserine from L-aspartate: step 2/3. The protein operates within amino-acid biosynthesis; L-threonine biosynthesis; L-threonine from L-aspartate: step 2/5. In terms of biological role, catalyzes the NADPH-dependent formation of L-aspartate-semialdehyde (L-ASA) by the reductive dephosphorylation of L-aspartyl-4-phosphate. The polypeptide is Aspartate-semialdehyde dehydrogenase (Rickettsia bellii (strain RML369-C)).